A 1003-amino-acid polypeptide reads, in one-letter code: Leucine-rich repeat receptor-like serine/threonine-protein kinase BAM1 (1003 aa).

Positions 1–19 (MKLFLLLLFLLHISHTFTA) are cleaved as a signal peptide. Over 20-640 (SRPISEFRAL…HSKGPLSASM (621 aa)) the chain is Extracellular. 22 LRR repeats span residues 68–92 (RRHV…VSHL), 93–116 (RLLQ…ISSL), 117–140 (SGLR…ISSG), 142–165 (VNLR…VTNL), 166–191 (TQLR…SWPV), 193–213 (EYLA…IGNL), 215–238 (TLRE…IGNL), 239–262 (SELV…IGKL), 263–285 (QKLD…ELGT), 286–310 (LSSL…FAEL), 312–334 (NLTL…IGDL), 335–358 (PELE…LGEN), 359–382 (GKLN…MCSG), 385–406 (LETL…LGKC), 407–430 (ESLT…LFGL), 432–454 (KLTQ…GGVS), 455–480 (VNLG…NFTG), 482–502 (QKLL…VGKL), 503–526 (QQLS…ISRC), 527–550 (KLLT…ITAM), 551–574 (KILN…ISSM), and 575–598 (QSLT…GQFS). N-linked (GlcNAc...) asparagine glycans are attached at residues Asn-80, Asn-97, Asn-123, Asn-130, Asn-153, and Asn-164. N-linked (GlcNAc...) asparagine glycans are attached at residues Asn-212 and Asn-237. N-linked (GlcNAc...) asparagine glycans are attached at residues Asn-312 and Asn-346. The N-linked (GlcNAc...) asparagine glycan is linked to Asn-420. N-linked (GlcNAc...) asparagine glycosylation is present at Asn-477. 3 N-linked (GlcNAc...) asparagine glycosylation sites follow: Asn-557, Asn-586, and Asn-601. Residues 641 to 661 (KLLLVLGLLVCSIAFAVVAII) traverse the membrane as a helical segment. Residues 662–1003 (KARSLKKASE…VQSPPDLLNL (342 aa)) are Cytoplasmic-facing. Residue Thr-686 is modified to Phosphothreonine. Positions 694–971 (LKEDNIIGKG…VQILTEIPKL (278 aa)) constitute a Protein kinase domain. ATP is bound by residues 700–708 (IGKGGAGIV) and Lys-722. Tyr-769 and Tyr-807 each carry phosphotyrosine. The active-site Proton acceptor is the Asp-820. Ser-855 is modified (phosphoserine). Phosphotyrosine is present on residues Tyr-863 and Tyr-870. Thr-871 carries the phosphothreonine modification. Residues 969-1003 (PKLPPSKDQPMTESAPESELSPKSGVQSPPDLLNL) are disordered. Phosphoserine is present on Ser-996.

The protein belongs to the protein kinase superfamily. Ser/Thr protein kinase family. Self-interacts and interacts with BAM2 and CLV1. Binds to the CLV3, CLE5, CLE11, CLE18, CLE19, CLE22, CLE25, CLE26, CLE40, CLE41 and CLE42 mature peptides, probably via its extracellular leucine-rich repeat region. As to expression, expressed in seedlings, roots, leaves, inflorescences, flowers and siliques.

The protein localises to the cell membrane. The enzyme catalyses L-seryl-[protein] + ATP = O-phospho-L-seryl-[protein] + ADP + H(+). It carries out the reaction L-threonyl-[protein] + ATP = O-phospho-L-threonyl-[protein] + ADP + H(+). In terms of biological role, necessary for male gametophyte development, as well as ovule specification and function. Involved in cell-cell communication process required during early anther development, and regulating cell division and differentiation to organize cell layers. Required for the development of high-ordered vascular strands within the leaf and a correlated control of leaf shape, size and symmetry. May regulate the CLV1-dependent CLV3-mediated signaling in meristems maintenance. In Arabidopsis thaliana (Mouse-ear cress), this protein is Leucine-rich repeat receptor-like serine/threonine-protein kinase BAM1 (BAM1).